Consider the following 103-residue polypeptide: Putative ribosomal RNA-processing protein 7 homolog B (103 aa).

Residues Met1–Glu19 show a composition bias toward basic and acidic residues. The segment at Met1–Glu25 is disordered. Residues Glu71–Phe100 adopt a coiled-coil conformation.

Belongs to the RRP7 family.

The sequence is that of Putative ribosomal RNA-processing protein 7 homolog B from Homo sapiens (Human).